The sequence spans 214 residues: Probable transaldolase (214 aa).

The active-site Schiff-base intermediate with substrate is the lysine 83.

It belongs to the transaldolase family. Type 3B subfamily.

The protein resides in the cytoplasm. The catalysed reaction is D-sedoheptulose 7-phosphate + D-glyceraldehyde 3-phosphate = D-erythrose 4-phosphate + beta-D-fructose 6-phosphate. It participates in carbohydrate degradation; pentose phosphate pathway; D-glyceraldehyde 3-phosphate and beta-D-fructose 6-phosphate from D-ribose 5-phosphate and D-xylulose 5-phosphate (non-oxidative stage): step 2/3. Its function is as follows. Transaldolase is important for the balance of metabolites in the pentose-phosphate pathway. This Thermodesulfovibrio yellowstonii (strain ATCC 51303 / DSM 11347 / YP87) protein is Probable transaldolase.